The chain runs to 440 residues: Stromal membrane-associated protein 1 (440 aa).

The Arf-GAP domain occupies 18–143; the sequence is QLILSKLLRE…IAITNKEKEK (126 aa). Residues 33–56 form a C4-type zinc finger; that stretch reads CADCEAKGPRWASWNIGVFICIRC. Basic and acidic residues-rich tracts occupy residues 140 to 158 and 165 to 178; these read EKEKKKDEKKREKEPEKPA and KLPKKEEQQLEPKK. Disordered stretches follow at residues 140 to 211 and 410 to 440; these read EKEK…PATA and NASAGFGQPPSTTAGWSGSSSGQTLSTQLWK. Residues 192–196 carry the Interaction with clathrin heavy chains motif; that stretch reads LLGLD. Positions 420–440 are enriched in low complexity; that stretch reads STTAGWSGSSSGQTLSTQLWK.

In terms of assembly, interacts with ARF6. Interacts with clathrin heavy chains via the clathrin box-like motif. In terms of tissue distribution, detected in adult brain, lung, heart, liver, ovary and bone marrow. Detected in stromal cells of the red pulp of adult spleen.

The protein localises to the cell membrane. Functionally, GTPase activating protein that acts on ARF6. Plays a role in clathrin-dependent endocytosis. May play a role in erythropoiesis. This Mus musculus (Mouse) protein is Stromal membrane-associated protein 1 (Smap1).